Here is a 2151-residue protein sequence, read N- to C-terminus: RNA-directed RNA polymerase L (2151 aa).

Mn(2+) is bound by residues histidine 36, glutamate 54, aspartate 97, glutamate 110, and valine 111. The For endonuclease activity role is filled by lysine 124. The RdRp catalytic domain maps to 956 to 1142 (NGKFIRMKRK…SVNTEMWKSM (187 aa)). Aspartate 1099 is a Mg(2+) binding site.

It belongs to the Bunyavirales RNA polymerase family. In terms of assembly, interacts with the viral nucleoprotein. The cofactor is Mn(2+). Mg(2+) serves as cofactor.

It is found in the host cytoplasm. It localises to the host perinuclear region. It catalyses the reaction RNA(n) + a ribonucleoside 5'-triphosphate = RNA(n+1) + diphosphate. Functionally, RNA-dependent RNA polymerase, which is responsible for the replication and transcription of the viral RNA genome using antigenomic RNA as an intermediate. During transcription, synthesizes subgenomic RNAs and assures their capping by a cap-snatching mechanism, which involves the endonuclease activity cleaving the host capped pre-mRNAs. These short capped RNAs are then used as primers for viral transcription. Cleaves ssRNA substrates but not DNA. Seems to downregulate the expression of its own and heterologous mRNAs through its endonuclease activity. The chain is RNA-directed RNA polymerase L from Apodemus agrarius (Eurasian field mouse).